A 190-amino-acid polypeptide reads, in one-letter code: Elongation factor P (190 aa).

This sequence belongs to the elongation factor P family.

Its subcellular location is the cytoplasm. It participates in protein biosynthesis; polypeptide chain elongation. In terms of biological role, involved in peptide bond synthesis. Stimulates efficient translation and peptide-bond synthesis on native or reconstituted 70S ribosomes in vitro. Probably functions indirectly by altering the affinity of the ribosome for aminoacyl-tRNA, thus increasing their reactivity as acceptors for peptidyl transferase. In Sulfurihydrogenibium sp. (strain YO3AOP1), this protein is Elongation factor P.